The following is a 230-amino-acid chain: Large ribosomal subunit protein uL1 (230 aa).

Belongs to the universal ribosomal protein uL1 family. Part of the 50S ribosomal subunit.

In terms of biological role, binds directly to 23S rRNA. The L1 stalk is quite mobile in the ribosome, and is involved in E site tRNA release. Functionally, protein L1 is also a translational repressor protein, it controls the translation of the L11 operon by binding to its mRNA. The chain is Large ribosomal subunit protein uL1 from Methylobacillus flagellatus (strain ATCC 51484 / DSM 6875 / VKM B-1610 / KT).